The chain runs to 1151 residues: MPNPPSFKSHKQNLFNSNNNQHANSVDSFDLHLDDSFDAALDSLQINNNPEPLSKHNTVGDRESFEMRTVDDLDNFSNHSSDSHRKSSNTDTHPLMYDNRLSQDDNFKFTNIASSPPSSSNNIFSKALSYLKVSNTKNWSKFGSPIELSDQHIEREIHPDTTPVYDRNRYVSNELSNAKYNAVTFVPTLLYEQFKFFYNLYFLVVALSQAVPALRIGYLSSYIVPLAFVLTVTMAKEAIDDIQRRRRDRESNNELYHVITRNRSIPSKDLKVGDLIKVHKGDRIPADLVLLQSSEPSGESFIKTDQLDGETDWKLRVACPLTQNLSENDLINRISITASAPEKSIHKFLGKVTYKDSTSNPLSVDNTLWANTVLASSGFCIACVVYTGRDTRQAMNTTTAKVKTGLLELEINSISKILCACVFALSILLVAFAGFHNDDWYIDILRYLILFSTIIPVSLRVNLDLAKSVYAHQIEHDKTIPETIVRTSTIPEDLGRIEYLLSDKTGTLTQNDMQLKKIHLGTVSYTSETLDIVSDYVQSLVSSKNDSLNNSKVALSTTRKDMSFRVRDMILTLAICHNVTPTFEDDELTYQAASPDEIAIVKFTESVGLSLFKRDRHSISLLHEHSGKTLNYEILQVFPFNSDSKRMGIIVRDEQLDEYWFMQKGADTVMSKIVESNDWLEEETGNMAREGLRTLVIGRKKLNKKIYEQFQKEYNDASLSMLNRDQQMSQVITKYLEHDLELLGLTGVEDKLQKDVKSSIELLRNAGIKIWMLTGDKVETARCVSISAKLISRGQYVHTITKVTRPEGAFNQLEYLKINRNACLLIDGESLGMFLKHYEQEFFDVVVHLPTVIACRCTPQQKADVALVIRKMTGKRVCCIGDGGNDVSMIQCADVGVGIVGKEGKQASLAADFSITQFCHLTELLLWHGRNSYKRSAKLAQFVMHRGLIIAICQAVYSICSLFEPIALYQGWLMVGYATCYTMAPVFSLTLDHDIEESLTKIYPELYKELTEGKSLSYKTFFVWVLLSLFQGSVIQLFSQAFTSLLDTDFTRMVAISFTALVVNELIMVALEIYTWNKTMLVTEIATLLFYIVSVPFLGDYFDLGYMTTVNYYAGLLVILLISIFPVWTAKAIYRRLHPPSYAKVQEFATP.

2 disordered regions span residues 1-21 and 73-95; these read MPNPPSFKSHKQNLFNSNNNQ and LDNFSNHSSDSHRKSSNTDTHPL. Over 1 to 184 the chain is Extracellular; sequence MPNPPSFKSH…LSNAKYNAVT (184 aa). Residues 12-21 show a composition bias toward polar residues; it reads QNLFNSNNNQ. A required for endosome-to-Golgi sorting region spans residues 51–104; it reads EPLSKHNTVGDRESFEMRTVDDLDNFSNHSSDSHRKSSNTDTHPLMYDNRLSQD. Serine 102 is subject to Phosphoserine. The chain crosses the membrane as a helical span at residues 185–205; it reads FVPTLLYEQFKFFYNLYFLVV. The Cytoplasmic segment spans residues 206-209; that stretch reads ALSQ. The chain crosses the membrane as a helical span at residues 210–230; sequence AVPALRIGYLSSYIVPLAFVL. The Extracellular segment spans residues 231-367; sequence TVTMAKEAID…TSNPLSVDNT (137 aa). The chain crosses the membrane as a helical span at residues 368 to 388; the sequence is LWANTVLASSGFCIACVVYTG. The Cytoplasmic portion of the chain corresponds to 389–416; sequence RDTRQAMNTTTAKVKTGLLELEINSISK. The chain crosses the membrane as a helical span at residues 417–437; that stretch reads ILCACVFALSILLVAFAGFHN. Aspartate 438 is a topological domain (extracellular). The chain crosses the membrane as a helical span at residues 439 to 459; it reads DWYIDILRYLILFSTIIPVSL. Topologically, residues 460-947 are cytoplasmic; sequence RVNLDLAKSV…KLAQFVMHRG (488 aa). Aspartate 503 (4-aspartylphosphate intermediate) is an active-site residue. Positions 503, 504, and 505 each coordinate ATP. Aspartate 503 lines the Mg(2+) pocket. Residue threonine 505 participates in Mg(2+) binding. Serine 551 is subject to Phosphoserine. ATP is bound by residues glutamate 597, phenylalanine 640, serine 642, lysine 645, lysine 664, arginine 693, threonine 694, threonine 774, glycine 775, aspartate 776, arginine 856, and lysine 862. A Mg(2+)-binding site is contributed by aspartate 882. The ATP site is built by asparagine 885 and aspartate 886. Aspartate 886 lines the Mg(2+) pocket. Residues 948 to 968 form a helical membrane-spanning segment; sequence LIIAICQAVYSICSLFEPIAL. Residues 969-970 lie on the Extracellular side of the membrane; the sequence is YQ. Residues 971–991 form a helical membrane-spanning segment; that stretch reads GWLMVGYATCYTMAPVFSLTL. Residues 992-1020 lie on the Cytoplasmic side of the membrane; sequence DHDIEESLTKIYPELYKELTEGKSLSYKT. Residues 1021 to 1041 form a helical membrane-spanning segment; the sequence is FFVWVLLSLFQGSVIQLFSQA. Residues 1042-1052 lie on the Extracellular side of the membrane; sequence FTSLLDTDFTR. Residues 1053 to 1073 traverse the membrane as a helical segment; sequence MVAISFTALVVNELIMVALEI. Over 1074-1078 the chain is Cytoplasmic; the sequence is YTWNK. The chain crosses the membrane as a helical span at residues 1079 to 1099; sequence TMLVTEIATLLFYIVSVPFLG. At 1100–1109 the chain is on the extracellular side; sequence DYFDLGYMTT. A helical membrane pass occupies residues 1110-1130; it reads VNYYAGLLVILLISIFPVWTA. Residues 1131 to 1151 lie on the Cytoplasmic side of the membrane; the sequence is KAIYRRLHPPSYAKVQEFATP. The tract at residues 1131 to 1151 is required for endosomal targeting; it reads KAIYRRLHPPSYAKVQEFATP.

It belongs to the cation transport ATPase (P-type) (TC 3.A.3) family. Type IV subfamily. Interacts with MON2. Interacts with ANY1. Functions without a CDC50/LEM3 family accessory subunit. Mg(2+) is required as a cofactor.

It localises to the endosome membrane. The protein localises to the golgi apparatus membrane. The catalysed reaction is ATP + H2O + phospholipidSide 1 = ADP + phosphate + phospholipidSide 2.. It carries out the reaction a 1,2-diacyl-sn-glycero-3-phospho-L-serine(out) + ATP + H2O = a 1,2-diacyl-sn-glycero-3-phospho-L-serine(in) + ADP + phosphate + H(+). The enzyme catalyses a 1,2-diacyl-sn-glycero-3-phosphoethanolamine(out) + ATP + H2O = a 1,2-diacyl-sn-glycero-3-phosphoethanolamine(in) + ADP + phosphate + H(+). In terms of biological role, flippase that catalyzes the hydrolysis of ATP coupled to the transport of lysophosphatidylserine, phosphatidylethanolamine, and phosphatidylserine from the lumenal to the cytosolic leaflet of the Golgi apparatus membrane and ensures the maintenance of asymmetric distribution of phospholipids. Does not appear to transport phosphatidylcholine or sphingomyelin. May be involved in recycling from endosomes by driving the formation of SNX3-dependent recycling tubules. Required for COPI retrograde transport from the Golgi to the endoplasmic reticulum, Golgi-endosome trafficking, and Golgi-dependent protein glycosylation. This chain is Phospholipid-transporting ATPase NEO1, found in Saccharomyces cerevisiae (strain ATCC 204508 / S288c) (Baker's yeast).